We begin with the raw amino-acid sequence, 100 residues long: Large ribosomal subunit protein uL23 (100 aa).

Belongs to the universal ribosomal protein uL23 family. Part of the 50S ribosomal subunit. Contacts protein L29, and trigger factor when it is bound to the ribosome.

In terms of biological role, one of the early assembly proteins it binds 23S rRNA. One of the proteins that surrounds the polypeptide exit tunnel on the outside of the ribosome. Forms the main docking site for trigger factor binding to the ribosome. The polypeptide is Large ribosomal subunit protein uL23 (Pectobacterium atrosepticum (strain SCRI 1043 / ATCC BAA-672) (Erwinia carotovora subsp. atroseptica)).